The following is a 495-amino-acid chain: 3-octaprenyl-4-hydroxybenzoate carboxy-lyase (495 aa).

Asparagine 171 contacts Mn(2+). Residues 174–176 (IYR), 188–190 (RWL), and 193–194 (RG) each bind prenylated FMN. Residue glutamate 237 coordinates Mn(2+). Catalysis depends on aspartate 286, which acts as the Proton donor.

It belongs to the UbiD family. In terms of assembly, homohexamer. Prenylated FMN serves as cofactor. Requires Mn(2+) as cofactor.

The protein resides in the cell membrane. It carries out the reaction a 4-hydroxy-3-(all-trans-polyprenyl)benzoate + H(+) = a 2-(all-trans-polyprenyl)phenol + CO2. It functions in the pathway cofactor biosynthesis; ubiquinone biosynthesis. Catalyzes the decarboxylation of 3-octaprenyl-4-hydroxy benzoate to 2-octaprenylphenol, an intermediate step in ubiquinone biosynthesis. This chain is 3-octaprenyl-4-hydroxybenzoate carboxy-lyase, found in Hamiltonella defensa subsp. Acyrthosiphon pisum (strain 5AT).